The primary structure comprises 448 residues: Beta-alanine--pyruvate aminotransferase (448 aa).

Tryptophan 61 is a binding site for substrate. 120 to 121 serves as a coordination point for pyridoxal 5'-phosphate; it reads GS. At lysine 288 the chain carries N6-(pyridoxal phosphate)lysine. Threonine 327 contacts pyridoxal 5'-phosphate. Substrate contacts are provided by arginine 414 and glutamine 421.

It belongs to the class-III pyridoxal-phosphate-dependent aminotransferase family. In terms of assembly, homotetramer. Pyridoxal 5'-phosphate serves as cofactor.

It carries out the reaction 3-oxopropanoate + L-alanine = beta-alanine + pyruvate. Inhibited by gabaculine (5-amino-1,3-cyclohexadienylcarboxylic acid). Functionally, involved in the degradation of beta-alanine. Catalyzes the transfer of the amino group from beta-alanine to pyruvate to yield L-alanine and 3-oxopropanoate. It can also accept both 4-aminobutyrate and (S)-alpha-methylbenzylamine (MBA) as amino-group donors in the presence of pyruvate as an amine acceptor. This Pseudomonas aeruginosa (strain ATCC 15692 / DSM 22644 / CIP 104116 / JCM 14847 / LMG 12228 / 1C / PRS 101 / PAO1) protein is Beta-alanine--pyruvate aminotransferase (bauA).